We begin with the raw amino-acid sequence, 134 residues long: Waprin-Phi1 (134 aa).

The first 23 residues, 1–23 (MTLRRGSCPLLLFSLVGLLTTCA), serve as a signal peptide directing secretion. 2 WAP domains span residues 36-82 (VAEK…SCQI) and 83-133 (PDEK…TTAR). Disulfide bonds link Cys43-Cys72, Cys55-Cys76, Cys59-Cys71, Cys65-Cys80, Cys90-Cys120, Cys103-Cys124, Cys107-Cys119, and Cys113-Cys129.

This sequence belongs to the venom waprin family. As to expression, expressed by the venom gland.

The protein localises to the secreted. Its function is as follows. Damages membranes of susceptible bacteria. Has no hemolytic activity. Not toxic to mice. Does not inhibit the proteinases elastase and cathepsin G. The chain is Waprin-Phi1 from Philodryas olfersii (Green snake).